Consider the following 545-residue polypeptide: Chaperonin GroEL (545 aa).

ATP is bound by residues 30 to 33 (TLGP), K51, 87 to 91 (DGTTT), G415, and D495.

It belongs to the chaperonin (HSP60) family. In terms of assembly, forms a cylinder of 14 subunits composed of two heptameric rings stacked back-to-back. Interacts with the co-chaperonin GroES.

It localises to the cytoplasm. It carries out the reaction ATP + H2O + a folded polypeptide = ADP + phosphate + an unfolded polypeptide.. Its function is as follows. Together with its co-chaperonin GroES, plays an essential role in assisting protein folding. The GroEL-GroES system forms a nano-cage that allows encapsulation of the non-native substrate proteins and provides a physical environment optimized to promote and accelerate protein folding. In Shewanella putrefaciens (strain CN-32 / ATCC BAA-453), this protein is Chaperonin GroEL.